Reading from the N-terminus, the 239-residue chain is Riboflavin synthase (239 aa).

Lumazine-binding repeat units follow at residues 1–105 (MFTG…MGGH) and 106–205 (VVQG…EKQI). Residues 4 to 6 (GLV), 54 to 56 (CLT), 70 to 75 (GISPET), 109 to 111 (GHV), K145, 154 to 156 (SLT), and 170 to 175 (SMVSYT) each bind 2,4-dihydroxypteridine.

In terms of assembly, homotrimer.

The catalysed reaction is 2 6,7-dimethyl-8-(1-D-ribityl)lumazine + H(+) = 5-amino-6-(D-ribitylamino)uracil + riboflavin. It participates in cofactor biosynthesis; riboflavin biosynthesis; riboflavin from 2-hydroxy-3-oxobutyl phosphate and 5-amino-6-(D-ribitylamino)uracil: step 2/2. Its function is as follows. Catalyzes the dismutation of two molecules of 6,7-dimethyl-8-ribityllumazine, resulting in the formation of riboflavin and 5-amino-6-(D-ribitylamino)uracil. This Meyerozyma guilliermondii (strain ATCC 6260 / CBS 566 / DSM 6381 / JCM 1539 / NBRC 10279 / NRRL Y-324) (Yeast) protein is Riboflavin synthase (RIB5).